The sequence spans 213 residues: Holliday junction resolvase RecU (213 aa).

The Mg(2+) site is built by T99, D101, E114, and Q133.

This sequence belongs to the RecU family. Requires Mg(2+) as cofactor.

Its subcellular location is the cytoplasm. The catalysed reaction is Endonucleolytic cleavage at a junction such as a reciprocal single-stranded crossover between two homologous DNA duplexes (Holliday junction).. Its function is as follows. Endonuclease that resolves Holliday junction intermediates in genetic recombination. Cleaves mobile four-strand junctions by introducing symmetrical nicks in paired strands. Promotes annealing of linear ssDNA with homologous dsDNA. Required for DNA repair, homologous recombination and chromosome segregation. This is Holliday junction resolvase RecU from Lactococcus lactis subsp. lactis (strain IL1403) (Streptococcus lactis).